Reading from the N-terminus, the 548-residue chain is Acetamidase (548 aa).

Residues K129 and S204 each act as charge relay system in the active site. S228 serves as the catalytic Acyl-ester intermediate.

This sequence belongs to the amidase family.

The enzyme catalyses a monocarboxylic acid amide + H2O = a monocarboxylate + NH4(+). It carries out the reaction acetamide + H2O = acetate + NH4(+). In terms of biological role, allows acetamide to be used as a sole carbon or nitrogen source. This Emericella nidulans (strain FGSC A4 / ATCC 38163 / CBS 112.46 / NRRL 194 / M139) (Aspergillus nidulans) protein is Acetamidase (amdS).